Consider the following 419-residue polypeptide: Imidazolonepropionase (419 aa).

Fe(3+) contacts are provided by His82 and His84. Zn(2+) is bound by residues His82 and His84. Residues Arg91, Tyr154, and His187 each contribute to the 4-imidazolone-5-propanoate site. Tyr154 contributes to the N-formimidoyl-L-glutamate binding site. Fe(3+) is bound at residue His252. His252 contacts Zn(2+). Glu255 is a binding site for 4-imidazolone-5-propanoate. A Fe(3+)-binding site is contributed by Asp326. Asp326 lines the Zn(2+) pocket. Positions 328 and 330 each coordinate N-formimidoyl-L-glutamate. Ser331 serves as a coordination point for 4-imidazolone-5-propanoate.

This sequence belongs to the metallo-dependent hydrolases superfamily. HutI family. Zn(2+) is required as a cofactor. The cofactor is Fe(3+).

The protein localises to the cytoplasm. It catalyses the reaction 4-imidazolone-5-propanoate + H2O = N-formimidoyl-L-glutamate. It functions in the pathway amino-acid degradation; L-histidine degradation into L-glutamate; N-formimidoyl-L-glutamate from L-histidine: step 3/3. In terms of biological role, catalyzes the hydrolytic cleavage of the carbon-nitrogen bond in imidazolone-5-propanoate to yield N-formimidoyl-L-glutamate. It is the third step in the universal histidine degradation pathway. The chain is Imidazolonepropionase from Clostridium tetani (strain Massachusetts / E88).